A 363-amino-acid polypeptide reads, in one-letter code: Heat-inducible transcription repressor HrcA (363 aa).

Belongs to the HrcA family.

Functionally, negative regulator of class I heat shock genes (grpE-dnaK-dnaJ and groELS operons). Prevents heat-shock induction of these operons. This chain is Heat-inducible transcription repressor HrcA, found in Rhizobium radiobacter (Agrobacterium tumefaciens).